Consider the following 445-residue polypeptide: Glutamate-1-semialdehyde 2,1-aminomutase (445 aa).

Residue Lys-281 is modified to N6-(pyridoxal phosphate)lysine.

This sequence belongs to the class-III pyridoxal-phosphate-dependent aminotransferase family. HemL subfamily. In terms of assembly, homodimer. The cofactor is pyridoxal 5'-phosphate.

The protein resides in the cytoplasm. It catalyses the reaction (S)-4-amino-5-oxopentanoate = 5-aminolevulinate. Its pathway is porphyrin-containing compound metabolism; protoporphyrin-IX biosynthesis; 5-aminolevulinate from L-glutamyl-tRNA(Glu): step 2/2. This is Glutamate-1-semialdehyde 2,1-aminomutase from Nocardioides sp. (strain ATCC BAA-499 / JS614).